A 302-amino-acid chain; its full sequence is Protoheme IX farnesyltransferase (302 aa).

9 helical membrane-spanning segments follow: residues 27-47 (VVAL…PGMV), 53-73 (LFGL…NHVI), 100-120 (LVFA…AVNV), 121-141 (LTAV…TVFL), 149-169 (IVWG…AVTG), 175-195 (PLLL…ALAI), 215-235 (VAFT…VSLV), 237-257 (FIIH…GIGF), and 273-293 (AMPT…LLLV).

It belongs to the UbiA prenyltransferase family. Protoheme IX farnesyltransferase subfamily.

Its subcellular location is the cell inner membrane. The catalysed reaction is heme b + (2E,6E)-farnesyl diphosphate + H2O = Fe(II)-heme o + diphosphate. The protein operates within porphyrin-containing compound metabolism; heme O biosynthesis; heme O from protoheme: step 1/1. Its function is as follows. Converts heme B (protoheme IX) to heme O by substitution of the vinyl group on carbon 2 of heme B porphyrin ring with a hydroxyethyl farnesyl side group. The polypeptide is Protoheme IX farnesyltransferase (Thioalkalivibrio sulfidiphilus (strain HL-EbGR7)).